The sequence spans 113 residues: Ig kappa chain V-II region MOPC 511 (113 aa).

The tract at residues 1–23 is framework-1; the sequence is DIVITQDELSKPVTSGESVSISC. Cysteines 23 and 93 form a disulfide. The interval 24 to 39 is complementarity-determining-1; it reads RSSKSLLYKDGKTYLN. Positions 40-54 are framework-2; that stretch reads WFLQGPQQSPRLLIY. The interval 55-61 is complementarity-determining-2; it reads LMSTRAS. A framework-3 region spans residues 62–93; sequence GVSDRFSGSGSGTDFTLEISRVKAEDVGVYYC. A complementarity-determining-3 region spans residues 94-102; the sequence is QQLVEYPLT. Positions 103-112 are framework-4; that stretch reads FGAGTKLELK.

This Mus musculus (Mouse) protein is Ig kappa chain V-II region MOPC 511.